Consider the following 373-residue polypeptide: tRNA-specific 2-thiouridylase MnmA (373 aa).

ATP contacts are provided by residues 12-19 and methionine 38; that span reads GMSGGVDS. The tract at residues 98 to 100 is interaction with target base in tRNA; sequence NPD. Cysteine 103 acts as the Nucleophile in catalysis. Cysteine 103 and cysteine 200 form a disulfide bridge. Glycine 127 contributes to the ATP binding site. The segment at 150-152 is interaction with tRNA; it reads KDQ. Cysteine 200 (cysteine persulfide intermediate) is an active-site residue. Positions 312-313 are interaction with tRNA; sequence RY.

It belongs to the MnmA/TRMU family.

It is found in the cytoplasm. The catalysed reaction is S-sulfanyl-L-cysteinyl-[protein] + uridine(34) in tRNA + AH2 + ATP = 2-thiouridine(34) in tRNA + L-cysteinyl-[protein] + A + AMP + diphosphate + H(+). Its function is as follows. Catalyzes the 2-thiolation of uridine at the wobble position (U34) of tRNA, leading to the formation of s(2)U34. The polypeptide is tRNA-specific 2-thiouridylase MnmA (Streptococcus pyogenes serotype M2 (strain MGAS10270)).